The primary structure comprises 77 residues: U8-lycotoxin-Ls1m (77 aa).

The N-terminal stretch at 1 to 20 (MKLIIFTGLVLFSIVSLIEA) is a signal peptide. The propeptide occupies 21-26 (QAENEK).

This sequence belongs to the neurotoxin 19 (CSTX) family. 08 (U8-Lctx) subfamily. Contains 4 disulfide bonds. As to expression, expressed by the venom gland.

The protein resides in the secreted. This is U8-lycotoxin-Ls1m from Lycosa singoriensis (Wolf spider).